Reading from the N-terminus, the 158-residue chain is Transcription elongation factor GreA (158 aa).

It belongs to the GreA/GreB family.

Its function is as follows. Necessary for efficient RNA polymerase transcription elongation past template-encoded arresting sites. The arresting sites in DNA have the property of trapping a certain fraction of elongating RNA polymerases that pass through, resulting in locked ternary complexes. Cleavage of the nascent transcript by cleavage factors such as GreA or GreB allows the resumption of elongation from the new 3'terminus. GreA releases sequences of 2 to 3 nucleotides. The polypeptide is Transcription elongation factor GreA (Wigglesworthia glossinidia brevipalpis).